The primary structure comprises 207 residues: RNA chaperone ProQ (207 aa).

The segment at 100-156 (TLAESKAKVQARRKEQAQKARDEEKSKPKTKKAPQQRRANKPQAQKPAKQPVETRAL) is disordered. Basic and acidic residues predominate over residues 111–126 (RRKEQAQKARDEEKSK). Over residues 127–139 (PKTKKAPQQRRAN) the composition is skewed to basic residues.

This sequence belongs to the ProQ family.

It localises to the cytoplasm. Functionally, RNA chaperone with significant RNA binding, RNA strand exchange and RNA duplexing activities. This chain is RNA chaperone ProQ, found in Vibrio vulnificus (strain CMCP6).